Here is a 237-residue protein sequence, read N- to C-terminus: tRNA1(Val) (adenine(37)-N6)-methyltransferase (237 aa).

Belongs to the methyltransferase superfamily. tRNA (adenine-N(6)-)-methyltransferase family.

It localises to the cytoplasm. It catalyses the reaction adenosine(37) in tRNA1(Val) + S-adenosyl-L-methionine = N(6)-methyladenosine(37) in tRNA1(Val) + S-adenosyl-L-homocysteine + H(+). In terms of biological role, specifically methylates the adenine in position 37 of tRNA(1)(Val) (anticodon cmo5UAC). This is tRNA1(Val) (adenine(37)-N6)-methyltransferase from Pasteurella multocida (strain Pm70).